Reading from the N-terminus, the 230-residue chain is UPF0494 membrane protein PB2B2.14c (230 aa).

Transmembrane regions (helical) follow at residues 78–98, 120–140, and 148–168; these read WPLLIIWCILIVFAIDKNFEV, IWGPIAIYICLFVLLLLGLIY, and AIPLISIVIAAVVVIIAVAMV.

The protein belongs to the UPF0494 family.

It is found in the membrane. This Schizosaccharomyces pombe (strain 972 / ATCC 24843) (Fission yeast) protein is UPF0494 membrane protein PB2B2.14c.